Consider the following 164-residue polypeptide: Protein SprT (164 aa).

Residues 12-157 form the SprT-like domain; sequence CFLQAESFFK…CRRCRQTLVF (146 aa). His-69 is a binding site for Zn(2+). The active site involves Glu-70. His-73 contacts Zn(2+).

The protein belongs to the SprT family. Zn(2+) is required as a cofactor.

Its subcellular location is the cytoplasm. The polypeptide is Protein SprT (Pseudomonas fluorescens (strain SBW25)).